Reading from the N-terminus, the 92-residue chain is Large ribosomal subunit protein bL27 (92 aa).

The propeptide occupies 1-8 (MLMNLQFF). The interval 11-30 (HKGGGSTANGRDSAGRRLGA) is disordered.

It belongs to the bacterial ribosomal protein bL27 family. In terms of processing, the N-terminus is cleaved by ribosomal processing cysteine protease Prp.

The chain is Large ribosomal subunit protein bL27 from Lactiplantibacillus plantarum (strain ATCC BAA-793 / NCIMB 8826 / WCFS1) (Lactobacillus plantarum).